Reading from the N-terminus, the 252-residue chain is H-2 class II histocompatibility antigen, A-F beta chain (252 aa).

The signal sequence occupies residues 1 to 16 (AAVVVLMVLSSPGTEG). The beta-1 stretch occupies residues 17–109 (GNSERHFVSQ…VETPTSLRRL (93 aa)). The Extracellular portion of the chain corresponds to 17–213 (GNSERHFVSQ…RAQSESARSK (197 aa)). Disulfide bonds link cysteine 31–cysteine 93 and cysteine 132–cysteine 188. Residue asparagine 35 is glycosylated (N-linked (GlcNAc...) asparagine). The tract at residues 110–203 (EQPNVVISLS…SLKSPITVEW (94 aa)) is beta-2. The region spanning 112–200 (PNVVISLSRT…EHPSLKSPIT (89 aa)) is the Ig-like C1-type domain. The segment at 204–213 (RAQSESARSK) is connecting peptide. The helical transmembrane segment at 214-234 (MLSGIGGCVLGVIFLGLGLFI) threads the bilayer. Over 235-252 (RYRSQKGPRGPPPAGLLQ) the chain is Cytoplasmic.

This sequence belongs to the MHC class II family. In terms of processing, ubiquitinated in immature dendritic cells leading to down-regulation of MHC class II.

Its subcellular location is the membrane. This chain is H-2 class II histocompatibility antigen, A-F beta chain (H2-Ab1), found in Mus musculus (Mouse).